The sequence spans 451 residues: Tubulin alpha-1B chain (451 aa).

Positions 1-4 (MREC) match the MREC motif motif. 4 residues coordinate GTP: glycine 10, glutamine 11, alanine 12, and glutamine 15. The residue at position 40 (lysine 40) is an N6,N6,N6-trimethyllysine; alternate. An N6-acetyllysine; alternate modification is found at lysine 40. At serine 48 the chain carries Phosphoserine. GTP is bound by residues glutamate 71, alanine 99, serine 140, glycine 143, glycine 144, threonine 145, glycine 146, threonine 179, glutamate 183, asparagine 206, tyrosine 224, and asparagine 228. Glutamate 71 contacts Mg(2+). Serine 232 carries the phosphoserine modification. Leucine 252 contacts GTP. The active site involves glutamate 254. Tyrosine 282 is subject to 3'-nitrotyrosine. Residue lysine 326 forms a Glycyl lysine isopeptide (Lys-Gly) (interchain with G-Cter in ubiquitin) linkage. At arginine 339 the chain carries Omega-N-methylarginine. Residue lysine 370 forms a Glycyl lysine isopeptide (Lys-Gly) (interchain with G-Cter in ubiquitin) linkage. Serine 439 bears the Phosphoserine mark. Residues glutamate 443 and glutamate 445 each carry the 5-glutamyl polyglutamate modification. Position 451 is a 3'-nitrotyrosine (tyrosine 451).

Belongs to the tubulin family. As to quaternary structure, heterodimer of alpha- and beta-tubulin. A typical microtubule is a hollow water-filled tube with an outer diameter of 25 nm and an inner diameter of 15 nM. Alpha-beta heterodimers associate head-to-tail to form protofilaments running lengthwise along the microtubule wall with the beta-tubulin subunit facing the microtubule plus end conferring a structural polarity. Microtubules usually have 13 protofilaments but different protofilament numbers can be found in some organisms and specialized cells. Interacts with gamma-tubulin; the interaction allows microtubules to nucleate from the gamma-tubulin ring complex (gTuRC). Nascent microtubule interacts (via alpha-tubulin MREC motif) with TTC5/STRAP; this interaction may result in tubulin mRNA-targeted degradation. Component of sperm flagellar doublet microtubules. Mg(2+) is required as a cofactor. Post-translationally, some glutamate residues at the C-terminus are polyglycylated, resulting in polyglycine chains on the gamma-carboxyl group. Glycylation is mainly limited to tubulin incorporated into axonemes (cilia and flagella) whereas glutamylation is prevalent in neuronal cells, centrioles, axonemes, and the mitotic spindle. Both modifications can coexist on the same protein on adjacent residues, and lowering polyglycylation levels increases polyglutamylation, and reciprocally. Cilia and flagella glycylation is required for their stability and maintenance. Flagella glycylation controls sperm motility. Some glutamate residues at the C-terminus are polyglutamylated, resulting in polyglutamate chains on the gamma-carboxyl group. Polyglutamylation plays a key role in microtubule severing by spastin (SPAST). SPAST preferentially recognizes and acts on microtubules decorated with short polyglutamate tails: severing activity by SPAST increases as the number of glutamates per tubulin rises from one to eight, but decreases beyond this glutamylation threshold. Glutamylation is also involved in cilia motility. In terms of processing, acetylation of alpha chains at Lys-40 is located inside the microtubule lumen. This modification has been correlated with increased microtubule stability, intracellular transport and ciliary assembly. Post-translationally, methylation of alpha chains at Lys-40 is found in mitotic microtubules and is required for normal mitosis and cytokinesis contributing to genomic stability. Nitration of Tyr-451 is irreversible and interferes with normal dynein intracellular distribution. In terms of processing, undergoes a tyrosination/detyrosination cycle, the cyclic removal and re-addition of a C-terminal tyrosine residue by the enzymes tubulin tyrosine carboxypeptidase (MATCAP1, VASH1 or VASH2) and tubulin tyrosine ligase (TTL), respectively. Post-translationally, tyrosination promotes microtubule interaction with CAP-Gly domain-containing proteins such as CLIP1, CLIP2 and DCTN1. Tyrosination regulates the initiation of dynein-dynactin motility via interaction with DCTN1, which brings the dynein-dynactin complex into contact with microtubules. In neurons, tyrosinated tubulins mediate the initiation of retrograde vesicle transport. Detyrosination is involved in metaphase plate congression by guiding chromosomes during mitosis: detyrosination promotes interaction with CENPE, promoting pole-proximal transport of chromosomes toward the equator. Detyrosination increases microtubules-dependent mechanotransduction in dystrophic cardiac and skeletal muscle. In cardiomyocytes, detyrosinated microtubules are required to resist to contractile compression during contraction: detyrosination promotes association with desmin (DES) at force-generating sarcomeres, leading to buckled microtubules and mechanical resistance to contraction.

Its subcellular location is the cytoplasm. It is found in the cytoskeleton. It catalyses the reaction GTP + H2O = GDP + phosphate + H(+). Tubulin is the major constituent of microtubules, protein filaments consisting of alpha- and beta-tubulin heterodimers. Microtubules grow by the addition of GTP-tubulin dimers to the microtubule end, where a stabilizing cap forms. Below the cap, tubulin dimers are in GDP-bound state, owing to GTPase activity of alpha-tubulin. The sequence is that of Tubulin alpha-1B chain (TUBA1B) from Pan troglodytes (Chimpanzee).